The chain runs to 879 residues: Alanine--tRNA ligase (879 aa).

The Zn(2+) site is built by His-566, His-570, Cys-668, and His-672.

This sequence belongs to the class-II aminoacyl-tRNA synthetase family. It depends on Zn(2+) as a cofactor.

The protein resides in the cytoplasm. The catalysed reaction is tRNA(Ala) + L-alanine + ATP = L-alanyl-tRNA(Ala) + AMP + diphosphate. Functionally, catalyzes the attachment of alanine to tRNA(Ala) in a two-step reaction: alanine is first activated by ATP to form Ala-AMP and then transferred to the acceptor end of tRNA(Ala). Also edits incorrectly charged Ser-tRNA(Ala) and Gly-tRNA(Ala) via its editing domain. The polypeptide is Alanine--tRNA ligase (Clostridium perfringens (strain 13 / Type A)).